The sequence spans 333 residues: Glycerol-3-phosphate dehydrogenase [NAD(P)+] (333 aa).

4 residues coordinate NADPH: S13, W14, R34, and K108. K108, G137, and S139 together coordinate sn-glycerol 3-phosphate. A141 contributes to the NADPH binding site. Sn-glycerol 3-phosphate contacts are provided by K192, D245, S255, R256, and N257. The active-site Proton acceptor is K192. R256 serves as a coordination point for NADPH. E282 contributes to the NADPH binding site.

This sequence belongs to the NAD-dependent glycerol-3-phosphate dehydrogenase family.

Its subcellular location is the cytoplasm. It catalyses the reaction sn-glycerol 3-phosphate + NAD(+) = dihydroxyacetone phosphate + NADH + H(+). The catalysed reaction is sn-glycerol 3-phosphate + NADP(+) = dihydroxyacetone phosphate + NADPH + H(+). The protein operates within membrane lipid metabolism; glycerophospholipid metabolism. In terms of biological role, catalyzes the reduction of the glycolytic intermediate dihydroxyacetone phosphate (DHAP) to sn-glycerol 3-phosphate (G3P), the key precursor for phospholipid synthesis. This Thioalkalivibrio sulfidiphilus (strain HL-EbGR7) protein is Glycerol-3-phosphate dehydrogenase [NAD(P)+].